The chain runs to 364 residues: Protein trichome birefringence-like 40 (364 aa).

Residues 9 to 25 form a helical; Signal-anchor for type II membrane protein membrane-spanning segment; that stretch reads LASLSLILFSSFPGLLA. Positions 118–120 match the GDS motif motif; that stretch reads GDS. Residues 341 to 355 carry the DCXHWCLPGXXDXWN motif motif; sequence DCSHWCLPGLPDTWN.

This sequence belongs to the PC-esterase family. TBL subfamily.

It localises to the membrane. May act as a bridging protein that binds pectin and other cell wall polysaccharides. Probably involved in maintaining esterification of pectins. May be involved in the specific O-acetylation of cell wall polymers. This chain is Protein trichome birefringence-like 40 (TBL40), found in Arabidopsis thaliana (Mouse-ear cress).